The following is a 446-amino-acid chain: Baeyer-Villiger monooxygenase dmxR6 (446 aa).

The protein belongs to the AflY oxidoreductase family.

It functions in the pathway secondary metabolite biosynthesis. Functionally, baeyer-Villiger monooxygenase; part of the gene cluster that mediates the biosynthesis of the dimeric xanthones cryptosporioptides. The pathway begins with the synthesis of atrochrysone thioester by the polyketide synthase dmx-nrPKS. The atrochrysone carboxyl ACP thioesterase dmxR1 then breaks the thioester bond and releases the atrochrysone carboxylic acid from dmx-nrPKS. Atrochrysone carboxylic acid is decarboxylated by the decarboxylase dmxR15, and oxidized by the anthrone oxygenase dmxR16 to yield emodin. Emodin is then reduced to emodin hydroquinone by the oxidoreductase dmxR7. A-ring reduction by the short chain dehydrogenase dmxR18, dehydration by the scytalone dehydratase-like protein dmxR17 and probable spontaneous re-oxidation, results in overall deoxygenation to chrysophanol. Baeyer-Villiger oxidation by the Baeyer-Villiger monooxygenase (BVMO) dmxR6 then yields monodictylactone in equilibrium with monodictyphenone. In the case of the cryptosporioptides biosynthesis, monodictylactone is reduced at C-12 to an alcohol (by the short chain dehydrogenases dmxR12 or dmxR8) and hydroxylated at C-5 by dmxR9, yielding the electron-rich aromatic which could eliminate H(2)O to form the ortho-quinonemethide, followed by tautomerisation to paraquinone and complete the formal reduction to produce the 10-methylgroup. Conjugate addition of C-4a-OH to the resulting paraquinone by the monooxygenase dmxR10 then gives cyclohexadienone, which is then reduced at C-5 by the short chain dehydrogenase dmxR3 to give the dihydroxanthone. The 6,7-epoxide in the cryptosporioptides could be introduced by the cytochrome P450 monooxygenase dmxL3. The highly reducing PKS dmxL2 manufactures butyrate, which is further carboxylated by dmxL1 to form ethylmalonate. It is not yet clear whether the carboxylation occurs while the butyrate is attached to the ACP of dmxL2, but this unusual fungal metabolite could then be esterified to O-5 by the O-acetyltransferase dmxR13. Finally, dimerization performed by dmxR5 gives the observed dimers cryptosporioptides A, B and C as the final products of the pathway. The chain is Baeyer-Villiger monooxygenase dmxR6 from Cryptosporiopsis sp. (strain 8999).